Here is a 114-residue protein sequence, read N- to C-terminus: Ribonuclease P protein component (114 aa).

This sequence belongs to the RnpA family. Consists of a catalytic RNA component (M1 or rnpB) and a protein subunit.

The catalysed reaction is Endonucleolytic cleavage of RNA, removing 5'-extranucleotides from tRNA precursor.. Functionally, RNaseP catalyzes the removal of the 5'-leader sequence from pre-tRNA to produce the mature 5'-terminus. It can also cleave other RNA substrates such as 4.5S RNA. The protein component plays an auxiliary but essential role in vivo by binding to the 5'-leader sequence and broadening the substrate specificity of the ribozyme. In Limosilactobacillus fermentum (strain NBRC 3956 / LMG 18251) (Lactobacillus fermentum), this protein is Ribonuclease P protein component.